A 609-amino-acid polypeptide reads, in one-letter code: MRVLYIHAERFTWDVKDPASDIRDEPISGKANNALVIFATVERGDIPDEGFLRQIARDIIDVANKVKASSIVIYPYAHLSSELARPYVAREVLNKLYEVVKSEFHGEVYKAPFGYYKAFEIKCFGHPLSELSRSFKPEGAKVEKKVEERRDVYIVLTPSGEEYNPADFNYDKFEDLKALVDKEVFKKELSGGSEPRYLDYLRKFGFEWESMSDVGHMRYAPEATIMIELVEDYAYMVAKSLGIPVFKIRGTNMFKLSETAIESHARLFGERLYVVESDTDLILRYAACFQQFAMVKDWVISYKHLPFGVIEIADSYRHEQPGETVLLFRLRRFFMPDLHIFTRDMAEAIDISFKLHEVIFREIEKLGRTYVSLYNVTEEFYKEYKNYLIELAKREGKPILVRILPGQKYYWVLNVEFHIIDELGRPREIATFQIDIGNAKRFGIKYVDENNQVRYPVIIHTAILGSVERYLYVVFDTMAKAEKAGKIPRLPTWLSPVQVRIIPITRDNLKYAVEIADKLETEGIRVDIDDRDETLSKKIRDAEVSWIPYICVVGSKEETEGVLSVRERGGGQYKTTPEELIKKIKEETRGYPNRPLYMPRFLSQRPSRG.

Residues 1–143 (MRVLYIHAER…SFKPEGAKVE (143 aa)) are editing domain. Catalytic regions lie at residues 195 to 491 (PRYL…PRLP) and 196 to 491 (RYLD…PRLP). The Zn(2+) site is built by Cys288, His339, and His460.

The protein belongs to the class-II aminoacyl-tRNA synthetase family. As to quaternary structure, homodimer. Zn(2+) is required as a cofactor.

The protein resides in the cytoplasm. The catalysed reaction is tRNA(Thr) + L-threonine + ATP = L-threonyl-tRNA(Thr) + AMP + diphosphate + H(+). Functionally, catalyzes the attachment of threonine to tRNA(Thr) in a two-step reaction: L-threonine is first activated by ATP to form Thr-AMP and then transferred to the acceptor end of tRNA(Thr). Also edits incorrectly charged L-seryl-tRNA(Thr). This chain is Threonine--tRNA ligase, found in Pyrobaculum islandicum (strain DSM 4184 / JCM 9189 / GEO3).